Consider the following 531-residue polypeptide: Endoglucanase 7 (531 aa).

Residues 1 to 27 (MRGRALVLVAALLLQLLLLAAAGGAGA) form the signal peptide. Asp-89 functions as the Nucleophile in the catalytic mechanism. Active-site residues include His-430, Asp-482, and Glu-491.

It belongs to the glycosyl hydrolase 9 (cellulase E) family. In terms of tissue distribution, ubiquitous.

It is found in the secreted. It catalyses the reaction Endohydrolysis of (1-&gt;4)-beta-D-glucosidic linkages in cellulose, lichenin and cereal beta-D-glucans.. This is Endoglucanase 7 (GLU10) from Oryza sativa subsp. japonica (Rice).